The primary structure comprises 160 residues: Cyclic pyranopterin monophosphate synthase (160 aa).

Residues 75-77 (LCH) and 113-114 (ME) each bind substrate. Asp-128 is an active-site residue.

The protein belongs to the MoaC family. Homohexamer; trimer of dimers.

The enzyme catalyses (8S)-3',8-cyclo-7,8-dihydroguanosine 5'-triphosphate = cyclic pyranopterin phosphate + diphosphate. The protein operates within cofactor biosynthesis; molybdopterin biosynthesis. In terms of biological role, catalyzes the conversion of (8S)-3',8-cyclo-7,8-dihydroguanosine 5'-triphosphate to cyclic pyranopterin monophosphate (cPMP). The polypeptide is Cyclic pyranopterin monophosphate synthase (Methylobacterium sp. (strain 4-46)).